Here is a 654-residue protein sequence, read N- to C-terminus: Insulin receptor substrate 1 (654 aa).

The PH domain occupies 3 to 107 (DIKKCGYLRK…WYQAILEVQA (105 aa)). Tyrosine 36 carries the phosphotyrosine modification. The region spanning 126 to 230 (FREVWQVSVR…EAMKSLSEEF (105 aa)) is the IRS-type PTB domain. The tract at residues 228–329 (EEFRPRTKSQ…EYGSSPGVLE (102 aa)) is disordered. The span at 235-245 (KSQSLSSTPIS) shows a compositional bias: polar residues. A Phosphoserine modification is found at serine 276. Polar residues predominate over residues 307-321 (NESSADYGSASSDEY). A Phosphotyrosine; by INSR modification is found at tyrosine 345. 6 short sequence motifs (YXXM motif) span residues 345–348 (YISM), 384–387 (YAMM), 398–401 (YMPM), 411–414 (YMPM), 430–433 (YVMM), and 466–469 (YMNM). Phosphotyrosine; by INSR is present on residues tyrosine 398 and tyrosine 411. A Phosphotyrosine modification is found at tyrosine 430. Disordered stretches follow at residues 473-494 (SRSA…GGPC) and 507-532 (YKME…VNAG). The span at 514 to 524 (SARASCSSSSD) shows a compositional bias: low complexity. Tyrosine 563 bears the Phosphotyrosine; by INSR mark.

As to quaternary structure, interacts with the NPXY motif of tyrosine-phosphorylated igf1r and insr via the PTB domain. Binds to phosphatidylinositol 3-kinase p85 subunit via the phosphorylated YXXM motifs.

Its function is as follows. May mediate the control of various cellular processes by insulin. When phosphorylated by the insulin receptor binds specifically to various cellular proteins containing SH2 domains such as phosphatidylinositol 3-kinase p85 subunit or grb2. Activates phosphatidylinositol 3-kinase when bound to the regulatory p85 subunit. This is Insulin receptor substrate 1 from Xenopus tropicalis (Western clawed frog).